A 1607-amino-acid chain; its full sequence is Abnormal cell migration protein 38 (1607 aa).

Disordered regions lie at residues 14-52, 67-93, 167-222, 326-425, 459-478, 549-594, 845-931, 1017-1061, 1141-1241, 1319-1378, 1392-1445, and 1517-1607; these read EFNKRADSPRAAGNYDFESGNIDNIPLNDDGPLSPSQDF, RLSPNGGLNREDQQPGPSGNNDGQYHV, STSY…AAQA, GSSA…PPSQ, SPNTNGPSSQLQRPQSGMDQ, MVHR…QHSY, YDEN…PETE, SVQV…DYDM, EPSP…VTPK, ETPN…KGQL, FANV…PQAV, and KVKT…STDP. Composition is skewed to polar residues over residues 81 to 93 and 179 to 191; these read PGPSGNNDGQYHV and PSGNSSSQINHQQ. Residues 195–205 are compositionally biased toward low complexity; the sequence is VPQVQQQPAKP. Positions 206–218 are enriched in basic residues; sequence KTTKKRPPPKKKT. Residues 327 to 341 show a composition bias toward low complexity; that stretch reads SSASSSAQPSQPAKK. Polar residues-rich tracts occupy residues 349-371 and 379-425; these read VPNTAKNLAQNQQIMPPQAQITP and PTTT…PPSQ. Over residues 585–594 the composition is skewed to low complexity; sequence NSHSQSQHSY. Residues 858 to 871 are compositionally biased toward acidic residues; that stretch reads EEPESESESEPEAE. 2 stretches are compositionally biased toward basic and acidic residues: residues 872 to 886 and 907 to 917; these read PEPKKDNFAEPEPAR and YRNESESTFDW. 3 stretches are compositionally biased toward low complexity: residues 1333 to 1354, 1395 to 1419, and 1584 to 1601; these read PNIPSTSTSIPPASTVVSSVSV, VPSSKPSTSSAVSATPSTSSAVSAK, and LLGTSNMNSSTNGSSSGL.

As to expression, expressed in gonad distal tip cells and gonad sheath cells.

It is found in the nucleus. Its subcellular location is the cytoplasm. During gonad development, involved in distal tip cell (DTC) migration from the dorsal side of the hermaphrodite body to the midbody which allows for the formation of gonad arms. Role in gonad DTC migration may be in association with integrin related proteins ina-1 and mig-15. This Caenorhabditis elegans protein is Abnormal cell migration protein 38.